We begin with the raw amino-acid sequence, 810 residues long: S-adenosyl-L-methionine-dependent tRNA 4-demethylwyosine synthase (810 aa).

Disordered regions lie at residues 86–116 (NGGG…KGGC) and 156–176 (RSST…VGKK). Over residues 104–116 (GCCSSKGGKKGGC) the composition is skewed to low complexity. Residues 159–172 (TPKVFSKNSSSNSR) are compositionally biased toward polar residues. The Flavodoxin-like domain occupies 205–360 (IYVLYSSLQG…KIDEWTSLLA (156 aa)). Residues 211–215 (SLQGA) and 304–337 (VLGL…RRIF) contribute to the FMN site. Over residues 374–397 (DENADSEEDEEEGNGSDELGDVED) the composition is skewed to acidic residues. Residues 374–407 (DENADSEEDEEEGNGSDELGDVEDIGGKGSNGKF) are disordered. Residues 463–713 (FNIASSRCME…ELQRRGLHYD (251 aa)) enclose the Radical SAM core domain. [4Fe-4S] cluster-binding residues include C479, C483, and C486. A Glycyl lysine isopeptide (Lys-Gly) (interchain with G-Cter in ubiquitin) cross-link involves residue K496. Positions 782–810 (RVYRKDKKKQNKENQETTTRETPLPPIPA) are disordered.

It belongs to the TYW1 family. [4Fe-4S] cluster is required as a cofactor.

It localises to the endoplasmic reticulum. It catalyses the reaction N(1)-methylguanosine(37) in tRNA(Phe) + pyruvate + S-adenosyl-L-methionine = 4-demethylwyosine(37) in tRNA(Phe) + 5'-deoxyadenosine + L-methionine + CO2 + H2O. The protein operates within tRNA modification; wybutosine-tRNA(Phe) biosynthesis. Functionally, component of the wybutosine biosynthesis pathway. Wybutosine is a hyper modified guanosine with a tricyclic base found at the 3'-position adjacent to the anticodon of eukaryotic phenylalanine tRNA. Catalyzes the condensation of N-methylguanine with 2 carbon atoms from pyruvate to form the tricyclic 4-demethylwyosine, an intermediate in wybutosine biosynthesis. The chain is S-adenosyl-L-methionine-dependent tRNA 4-demethylwyosine synthase (TYW1) from Saccharomyces cerevisiae (strain ATCC 204508 / S288c) (Baker's yeast).